The sequence spans 649 residues: Putative calpain-like cysteine protease A (649 aa).

Residues 1 to 3 (MLT) constitute a propeptide that is removed on maturation. Disordered regions lie at residues 1 to 22 (MLTT…SSPS) and 124 to 193 (PLSN…SMPA). The C2 domain maps to 15–123 (TTTTSSPSSD…LHANGEAKWY (109 aa)). Over residues 140 to 149 (ITNSNNKDNN) the composition is skewed to low complexity. A compositionally biased stretch (basic and acidic residues) spans 159–172 (AQEKGDEDQHHSAD). Domain III regions lie at residues 458–489 (EGTY…NATF) and 498–633 (EVEQ…ISLD).

Belongs to the peptidase C2 family. As to quaternary structure, monomer. Post-translationally, undergoes autolytic cleavage between Pro-192 and Ala-193.

It is found in the cytoplasm. It localises to the cytosol. In terms of biological role, has a weak caseinolytic activity. The polypeptide is Putative calpain-like cysteine protease A (cplA) (Dictyostelium discoideum (Social amoeba)).